The sequence spans 264 residues: DNA repair protein RecO (264 aa).

The protein belongs to the RecO family.

Functionally, involved in DNA repair and RecF pathway recombination. This is DNA repair protein RecO from Leuconostoc citreum (strain KM20).